Consider the following 262-residue polypeptide: Type II restriction enzyme HinfI (262 aa).

The catalysed reaction is Endonucleolytic cleavage of DNA to give specific double-stranded fragments with terminal 5'-phosphates.. A P subtype restriction enzyme that recognizes the double-stranded sequence 5'-GANTC-3' and cleaves after G-1. This chain is Type II restriction enzyme HinfI (hinfIR), found in Haemophilus influenzae.